Reading from the N-terminus, the 339-residue chain is Ketol-acid reductoisomerase (NADP(+)) (339 aa).

The KARI N-terminal Rossmann domain occupies 1 to 182; the sequence is MRVYYDRDAD…GGGRAGIIET (182 aa). NADP(+) contacts are provided by residues 24-27, Arg48, Ser51, Ser53, and 83-86; these read YGSQ and DELQ. Residue His108 is part of the active site. Gly134 serves as a coordination point for NADP(+). The KARI C-terminal knotted domain maps to 183-328; it reads TFREECETDL…AKLRDMMPWI (146 aa). 4 residues coordinate Mg(2+): Asp191, Glu195, Glu227, and Glu231. Position 252 (Ser252) interacts with substrate.

This sequence belongs to the ketol-acid reductoisomerase family. Requires Mg(2+) as cofactor.

It catalyses the reaction (2R)-2,3-dihydroxy-3-methylbutanoate + NADP(+) = (2S)-2-acetolactate + NADPH + H(+). The enzyme catalyses (2R,3R)-2,3-dihydroxy-3-methylpentanoate + NADP(+) = (S)-2-ethyl-2-hydroxy-3-oxobutanoate + NADPH + H(+). It participates in amino-acid biosynthesis; L-isoleucine biosynthesis; L-isoleucine from 2-oxobutanoate: step 2/4. The protein operates within amino-acid biosynthesis; L-valine biosynthesis; L-valine from pyruvate: step 2/4. Involved in the biosynthesis of branched-chain amino acids (BCAA). Catalyzes an alkyl-migration followed by a ketol-acid reduction of (S)-2-acetolactate (S2AL) to yield (R)-2,3-dihydroxy-isovalerate. In the isomerase reaction, S2AL is rearranged via a Mg-dependent methyl migration to produce 3-hydroxy-3-methyl-2-ketobutyrate (HMKB). In the reductase reaction, this 2-ketoacid undergoes a metal-dependent reduction by NADPH to yield (R)-2,3-dihydroxy-isovalerate. The chain is Ketol-acid reductoisomerase (NADP(+)) from Rhodopseudomonas palustris (strain BisB18).